Here is a 283-residue protein sequence, read N- to C-terminus: Urease accessory protein UreD (283 aa).

Belongs to the UreD family. As to quaternary structure, ureD, UreF and UreG form a complex that acts as a GTP-hydrolysis-dependent molecular chaperone, activating the urease apoprotein by helping to assemble the nickel containing metallocenter of UreC. The UreE protein probably delivers the nickel.

It localises to the cytoplasm. In terms of biological role, required for maturation of urease via the functional incorporation of the urease nickel metallocenter. In Acaryochloris marina (strain MBIC 11017), this protein is Urease accessory protein UreD.